Consider the following 608-residue polypeptide: Glutamine--fructose-6-phosphate aminotransferase [isomerizing] (608 aa).

The active-site Nucleophile; for GATase activity is cysteine 2. Residues 2-217 (CGIVGILGRE…DGDWVVLTRN (216 aa)) enclose the Glutamine amidotransferase type-2 domain. SIS domains follow at residues 284–423 (LPFD…ARGE) and 456–598 (LARE…VDQP). Residue lysine 603 is the For Fru-6P isomerization activity of the active site.

In terms of assembly, homodimer.

It is found in the cytoplasm. It catalyses the reaction D-fructose 6-phosphate + L-glutamine = D-glucosamine 6-phosphate + L-glutamate. Functionally, catalyzes the first step in hexosamine metabolism, converting fructose-6P into glucosamine-6P using glutamine as a nitrogen source. The sequence is that of Glutamine--fructose-6-phosphate aminotransferase [isomerizing] (glmS) from Bradyrhizobium diazoefficiens (strain JCM 10833 / BCRC 13528 / IAM 13628 / NBRC 14792 / USDA 110).